The primary structure comprises 277 residues: Large ribosomal subunit protein uL2 (277 aa).

Residues glycine 222–lysine 277 are disordered.

The protein belongs to the universal ribosomal protein uL2 family. Part of the 50S ribosomal subunit. Forms a bridge to the 30S subunit in the 70S ribosome.

Its function is as follows. One of the primary rRNA binding proteins. Required for association of the 30S and 50S subunits to form the 70S ribosome, for tRNA binding and peptide bond formation. It has been suggested to have peptidyltransferase activity; this is somewhat controversial. Makes several contacts with the 16S rRNA in the 70S ribosome. The chain is Large ribosomal subunit protein uL2 from Rhodopseudomonas palustris (strain BisB18).